The chain runs to 351 residues: Probable inactive tRNA-specific adenosine deaminase-like protein 3 (351 aa).

N-acetylmethionine is present on Met1. The interval 1-26 (MEPAPGLVEQPKCLEAGSPEPEPAPW) is disordered. The 166-residue stretch at 171–336 (AAMQSHMERA…PDLNHRFQVF (166 aa)) folds into the CMP/dCMP-type deaminase domain. The Zn(2+) site is built by His223, Cys291, and Cys294.

It belongs to the cytidine and deoxycytidylate deaminase family. ADAT3 subfamily. Zn(2+) is required as a cofactor.

This Homo sapiens (Human) protein is Probable inactive tRNA-specific adenosine deaminase-like protein 3 (ADAT3).